A 565-amino-acid chain; its full sequence is Adenine deaminase (565 aa).

The protein belongs to the metallo-dependent hydrolases superfamily. Adenine deaminase family. Requires Mn(2+) as cofactor.

It catalyses the reaction adenine + H2O + H(+) = hypoxanthine + NH4(+). This is Adenine deaminase from Lactobacillus delbrueckii subsp. bulgaricus (strain ATCC 11842 / DSM 20081 / BCRC 10696 / JCM 1002 / NBRC 13953 / NCIMB 11778 / NCTC 12712 / WDCM 00102 / Lb 14).